Reading from the N-terminus, the 266-residue chain is Type III pantothenate kinase (266 aa).

Aspartate 6–valine 13 contacts ATP. Substrate is bound at residue glycine 107–arginine 110. The Proton acceptor role is filled by aspartate 109. Aspartate 129 serves as a coordination point for K(+). Threonine 132 provides a ligand contact to ATP. Residue threonine 184 participates in substrate binding.

Belongs to the type III pantothenate kinase family. Homodimer. NH4(+) serves as cofactor. K(+) is required as a cofactor.

Its subcellular location is the cytoplasm. The catalysed reaction is (R)-pantothenate + ATP = (R)-4'-phosphopantothenate + ADP + H(+). The protein operates within cofactor biosynthesis; coenzyme A biosynthesis; CoA from (R)-pantothenate: step 1/5. Functionally, catalyzes the phosphorylation of pantothenate (Pan), the first step in CoA biosynthesis. The sequence is that of Type III pantothenate kinase from Acidiphilium cryptum (strain JF-5).